The sequence spans 626 residues: Chaperone protein HtpG (626 aa).

The segment at 1–341 is a; substrate-binding; that stretch reads MAKREFKAES…SEDLSLNISR (341 aa). A b region spans residues 342–552; the sequence is EMLQHDRQLK…DGEVTIEMEK (211 aa). The interval 553–626 is c; it reads ILNAMPDNQH…FTNDICKVMA (74 aa).

The protein belongs to the heat shock protein 90 family. Homodimer.

The protein localises to the cytoplasm. Its function is as follows. Molecular chaperone. Has ATPase activity. The chain is Chaperone protein HtpG from Bacillus licheniformis (strain ATCC 14580 / DSM 13 / JCM 2505 / CCUG 7422 / NBRC 12200 / NCIMB 9375 / NCTC 10341 / NRRL NRS-1264 / Gibson 46).